We begin with the raw amino-acid sequence, 419 residues long: Protein-lysine N-methyltransferase EFM2 (419 aa).

Residues Trp-222, 261–263 (GAG), Asp-290, Trp-318, and Ala-340 contribute to the S-adenosyl-L-methionine site.

It belongs to the class I-like SAM-binding methyltransferase superfamily. METTL21 family.

It is found in the cytoplasm. Its function is as follows. S-adenosyl-L-methionine-dependent protein-lysine N-methyltransferase that mono- and dimethylates elongation factor 2 (EFT1/EFT2) at 'Lys-613' and methylates elongation factor 3A (YEF3). The protein is Protein-lysine N-methyltransferase EFM2 of Saccharomyces cerevisiae (strain ATCC 204508 / S288c) (Baker's yeast).